A 508-amino-acid chain; its full sequence is Lysine--tRNA ligase (508 aa).

Mg(2+) is bound by residues Glu-418 and Glu-425.

The protein belongs to the class-II aminoacyl-tRNA synthetase family. Homodimer. It depends on Mg(2+) as a cofactor.

It is found in the cytoplasm. The enzyme catalyses tRNA(Lys) + L-lysine + ATP = L-lysyl-tRNA(Lys) + AMP + diphosphate. The protein is Lysine--tRNA ligase of Burkholderia thailandensis (strain ATCC 700388 / DSM 13276 / CCUG 48851 / CIP 106301 / E264).